A 756-amino-acid chain; its full sequence is Glutathione biosynthesis bifunctional protein GshAB (756 aa).

The segment at 1-338 (MNYRELMQKK…TGDIFNEQVA (338 aa)) is glutamate--cysteine ligase. The ATP-grasp domain maps to 493–751 (KKILSAAGFH…LTMDVLKLLY (259 aa)). 520 to 578 (LRYANKAFVVKPKSTNYGLGITIFKEGASLEDFTEALRIAFKEDTAVLIEEFLPGTEYR) contributes to the ATP binding site. Mg(2+) contacts are provided by Asp-700, Glu-721, and Asn-723. 3 residues coordinate Mn(2+): Asp-700, Glu-721, and Asn-723.

The protein in the N-terminal section; belongs to the glutamate--cysteine ligase type 1 family. Type 2 subfamily. As to quaternary structure, monomer. It depends on Mg(2+) as a cofactor. Mn(2+) is required as a cofactor.

The catalysed reaction is L-cysteine + L-glutamate + ATP = gamma-L-glutamyl-L-cysteine + ADP + phosphate + H(+). It catalyses the reaction gamma-L-glutamyl-L-cysteine + glycine + ATP = glutathione + ADP + phosphate + H(+). Its pathway is sulfur metabolism; glutathione biosynthesis; glutathione from L-cysteine and L-glutamate: step 1/2. The protein operates within sulfur metabolism; glutathione biosynthesis; glutathione from L-cysteine and L-glutamate: step 2/2. Functionally, synthesizes glutathione from L-glutamate and L-cysteine via gamma-L-glutamyl-L-cysteine. The polypeptide is Glutathione biosynthesis bifunctional protein GshAB (Enterococcus faecalis (strain ATCC 700802 / V583)).